Reading from the N-terminus, the 216-residue chain is Large ribosomal subunit protein uL4 (216 aa).

The tract at residues 47–77 (THKVKGMGEVSGTTKKPYRQKGTGNARQGSL) is disordered.

The protein belongs to the universal ribosomal protein uL4 family. In terms of assembly, part of the 50S ribosomal subunit.

Functionally, one of the primary rRNA binding proteins, this protein initially binds near the 5'-end of the 23S rRNA. It is important during the early stages of 50S assembly. It makes multiple contacts with different domains of the 23S rRNA in the assembled 50S subunit and ribosome. Its function is as follows. Forms part of the polypeptide exit tunnel. This chain is Large ribosomal subunit protein uL4, found in Acidiphilium cryptum (strain JF-5).